The sequence spans 396 residues: GDSL esterase/lipase ACHE (396 aa).

Positions 1–31 (MATAATATAGSRAAVLLLLSLALALALRPSD) are cleaved as a signal peptide. Ser-49 (nucleophile) is an active-site residue. Asn-108, Asn-126, Asn-151, Asn-196, and Asn-339 each carry an N-linked (GlcNAc...) asparagine glycan. Residues Asp-359 and His-362 contribute to the active site.

The protein belongs to the 'GDSL' lipolytic enzyme family.

The protein resides in the secreted. Its function is as follows. Esterase that can hydrolyze acetylthiocholine and propionylthiocholine in vitro. Substrate preference is propionylthiocholine &gt; acetylthiocholine. Possesses extremely low activity against butyrylthiocholine. This Zea mays (Maize) protein is GDSL esterase/lipase ACHE.